The following is a 286-amino-acid chain: 4-diphosphocytidyl-2-C-methyl-D-erythritol kinase (286 aa).

The active site involves lysine 11. Residue 93–103 (PFGAGLGGGSS) coordinates ATP. Residue aspartate 135 is part of the active site.

This sequence belongs to the GHMP kinase family. IspE subfamily.

The catalysed reaction is 4-CDP-2-C-methyl-D-erythritol + ATP = 4-CDP-2-C-methyl-D-erythritol 2-phosphate + ADP + H(+). Its pathway is isoprenoid biosynthesis; isopentenyl diphosphate biosynthesis via DXP pathway; isopentenyl diphosphate from 1-deoxy-D-xylulose 5-phosphate: step 3/6. Its function is as follows. Catalyzes the phosphorylation of the position 2 hydroxy group of 4-diphosphocytidyl-2C-methyl-D-erythritol. The protein is 4-diphosphocytidyl-2-C-methyl-D-erythritol kinase of Chlorobaculum tepidum (strain ATCC 49652 / DSM 12025 / NBRC 103806 / TLS) (Chlorobium tepidum).